The sequence spans 255 residues: 4-hydroxy-tetrahydrodipicolinate reductase (255 aa).

Residues Gly8–Val13, Gly88–Thr90, and Ala112–Met115 each bind NAD(+). His144 (proton donor/acceptor) is an active-site residue. Residue His145 participates in (S)-2,3,4,5-tetrahydrodipicolinate binding. Lys148 (proton donor) is an active-site residue. Gly154–Thr155 is a binding site for (S)-2,3,4,5-tetrahydrodipicolinate.

Belongs to the DapB family.

The protein localises to the cytoplasm. The enzyme catalyses (S)-2,3,4,5-tetrahydrodipicolinate + NAD(+) + H2O = (2S,4S)-4-hydroxy-2,3,4,5-tetrahydrodipicolinate + NADH + H(+). The catalysed reaction is (S)-2,3,4,5-tetrahydrodipicolinate + NADP(+) + H2O = (2S,4S)-4-hydroxy-2,3,4,5-tetrahydrodipicolinate + NADPH + H(+). The protein operates within amino-acid biosynthesis; L-lysine biosynthesis via DAP pathway; (S)-tetrahydrodipicolinate from L-aspartate: step 4/4. Its function is as follows. Catalyzes the conversion of 4-hydroxy-tetrahydrodipicolinate (HTPA) to tetrahydrodipicolinate. This Sulfurimonas denitrificans (strain ATCC 33889 / DSM 1251) (Thiomicrospira denitrificans (strain ATCC 33889 / DSM 1251)) protein is 4-hydroxy-tetrahydrodipicolinate reductase.